Reading from the N-terminus, the 254-residue chain is 5'-nucleotidase SurE (254 aa).

A divalent metal cation is bound by residues Asp8, Asp9, Ser39, and Asn97.

Belongs to the SurE nucleotidase family. The cofactor is a divalent metal cation.

Its subcellular location is the cytoplasm. It carries out the reaction a ribonucleoside 5'-phosphate + H2O = a ribonucleoside + phosphate. Functionally, nucleotidase that shows phosphatase activity on nucleoside 5'-monophosphates. The chain is 5'-nucleotidase SurE from Alkaliphilus metalliredigens (strain QYMF).